The sequence spans 378 residues: 3-dehydroquinate synthase (378 aa).

NAD(+) is bound by residues 115-119 (GVVGD), 139-140 (TS), Lys152, and Lys161. Zn(2+) contacts are provided by Glu194, His256, and His275.

Belongs to the sugar phosphate cyclases superfamily. Dehydroquinate synthase family. It depends on Co(2+) as a cofactor. Requires Zn(2+) as cofactor. NAD(+) is required as a cofactor.

Its subcellular location is the cytoplasm. The catalysed reaction is 7-phospho-2-dehydro-3-deoxy-D-arabino-heptonate = 3-dehydroquinate + phosphate. The protein operates within metabolic intermediate biosynthesis; chorismate biosynthesis; chorismate from D-erythrose 4-phosphate and phosphoenolpyruvate: step 2/7. Catalyzes the conversion of 3-deoxy-D-arabino-heptulosonate 7-phosphate (DAHP) to dehydroquinate (DHQ). In Brucella abortus biovar 1 (strain 9-941), this protein is 3-dehydroquinate synthase.